We begin with the raw amino-acid sequence, 545 residues long: Glucose-6-phosphate isomerase (545 aa).

Catalysis depends on E351, which acts as the Proton donor. Catalysis depends on residues H382 and K510.

The protein belongs to the GPI family.

The protein localises to the cytoplasm. The catalysed reaction is alpha-D-glucose 6-phosphate = beta-D-fructose 6-phosphate. Its pathway is carbohydrate biosynthesis; gluconeogenesis. It functions in the pathway carbohydrate degradation; glycolysis; D-glyceraldehyde 3-phosphate and glycerone phosphate from D-glucose: step 2/4. In terms of biological role, catalyzes the reversible isomerization of glucose-6-phosphate to fructose-6-phosphate. This Shewanella sediminis (strain HAW-EB3) protein is Glucose-6-phosphate isomerase.